Consider the following 141-residue polypeptide: Nucleoside diphosphate kinase (141 aa).

Residues Lys11, Phe59, Arg87, Thr93, Arg104, and Asn114 each contribute to the ATP site. Catalysis depends on His117, which acts as the Pros-phosphohistidine intermediate.

The protein belongs to the NDK family. As to quaternary structure, homotetramer. The cofactor is Mg(2+).

The protein localises to the cytoplasm. It catalyses the reaction a 2'-deoxyribonucleoside 5'-diphosphate + ATP = a 2'-deoxyribonucleoside 5'-triphosphate + ADP. The catalysed reaction is a ribonucleoside 5'-diphosphate + ATP = a ribonucleoside 5'-triphosphate + ADP. Major role in the synthesis of nucleoside triphosphates other than ATP. The ATP gamma phosphate is transferred to the NDP beta phosphate via a ping-pong mechanism, using a phosphorylated active-site intermediate. This is Nucleoside diphosphate kinase from Stenotrophomonas maltophilia (strain R551-3).